We begin with the raw amino-acid sequence, 387 residues long: Flap endonuclease 1 (387 aa).

An N-domain region spans residues 1-104; sequence MGILGLSKLI…GELAKRAERR (104 aa). Aspartate 34 is a binding site for Mg(2+). DNA-binding residues include arginine 47 and arginine 70. Mg(2+) contacts are provided by aspartate 86, glutamate 158, glutamate 160, aspartate 179, and aspartate 181. Residues 122–253 form an I-domain region; sequence GIEKFNRRLV…KRAIELINNY (132 aa). Glutamate 158 provides a ligand contact to DNA. Residues glycine 231 and aspartate 233 each contribute to the DNA site. Residue aspartate 233 coordinates Mg(2+). Residues 336–344 are interaction with PCNA; the sequence is TQVRLDSFF. The interval 346 to 387 is disordered; sequence TLPSTPNATNAAKRKAEEAKKSANNKKAKTSGGVGGRGRRPK.

The protein belongs to the XPG/RAD2 endonuclease family. FEN1 subfamily. Interacts with PCNA. Three molecules of FEN1 bind to one PCNA trimer with each molecule binding to one PCNA monomer. PCNA stimulates the nuclease activity without altering cleavage specificity. Mg(2+) serves as cofactor. Phosphorylated. Phosphorylation upon DNA damage induces relocalization to the nuclear plasma.

Its subcellular location is the nucleus. The protein resides in the nucleolus. It is found in the nucleoplasm. The protein localises to the mitochondrion. Structure-specific nuclease with 5'-flap endonuclease and 5'-3' exonuclease activities involved in DNA replication and repair. During DNA replication, cleaves the 5'-overhanging flap structure that is generated by displacement synthesis when DNA polymerase encounters the 5'-end of a downstream Okazaki fragment. It enters the flap from the 5'-end and then tracks to cleave the flap base, leaving a nick for ligation. Also involved in the long patch base excision repair (LP-BER) pathway, by cleaving within the apurinic/apyrimidinic (AP) site-terminated flap. Acts as a genome stabilization factor that prevents flaps from equilibrating into structures that lead to duplications and deletions. Also possesses 5'-3' exonuclease activity on nicked or gapped double-stranded DNA, and exhibits RNase H activity. Also involved in replication and repair of rDNA and in repairing mitochondrial DNA. This Drosophila erecta (Fruit fly) protein is Flap endonuclease 1.